The chain runs to 704 residues: Elongation factor G (704 aa).

In terms of domain architecture, tr-type G spans alanine 8–threonine 290. Residues alanine 17–threonine 24, aspartate 88–histidine 92, and asparagine 142–aspartate 145 contribute to the GTP site.

The protein belongs to the TRAFAC class translation factor GTPase superfamily. Classic translation factor GTPase family. EF-G/EF-2 subfamily.

The protein localises to the cytoplasm. Catalyzes the GTP-dependent ribosomal translocation step during translation elongation. During this step, the ribosome changes from the pre-translocational (PRE) to the post-translocational (POST) state as the newly formed A-site-bound peptidyl-tRNA and P-site-bound deacylated tRNA move to the P and E sites, respectively. Catalyzes the coordinated movement of the two tRNA molecules, the mRNA and conformational changes in the ribosome. This Pectobacterium atrosepticum (strain SCRI 1043 / ATCC BAA-672) (Erwinia carotovora subsp. atroseptica) protein is Elongation factor G.